Here is a 411-residue protein sequence, read N- to C-terminus: Putative competence-damage inducible protein (411 aa).

This sequence belongs to the CinA family.

This Caldicellulosiruptor saccharolyticus (strain ATCC 43494 / DSM 8903 / Tp8T 6331) protein is Putative competence-damage inducible protein.